Here is a 932-residue protein sequence, read N- to C-terminus: Transcriptional regulatory protein DagR (932 aa).

Positions 111–343 (LIGYDRSLRD…LKSDIQFLCA (233 aa)) constitute a Sigma-54 factor interaction domain. Residues 141-148 (GPSGVGKT) and 210-219 (ADGGYLLLDE) each bind ATP. Residues 462–567 (RYGDQIEERV…KECRHYRQRI (106 aa)) enclose the PRD 1 domain. The residue at position 497 (His497) is a Phosphohistidine. The 137-residue stretch at 572-708 (DCGVILIAHG…PQQENGGKVL (137 aa)) folds into the PTS EIIA type-4 domain. His580 serves as the catalytic Tele-phosphohistidine intermediate. The PRD 2 domain maps to 835-932 (LNPQRILKEM…YFYIYELLYS (98 aa)). A Phosphohistidine modification is found at His870.

In terms of biological role, involved in the regulation of the catabolism of D-glucosaminate. This chain is Transcriptional regulatory protein DagR (dgaR), found in Salmonella typhimurium (strain 14028s / SGSC 2262).